Reading from the N-terminus, the 335-residue chain is Probable cytosolic iron-sulfur protein assembly protein Ciao1 (335 aa).

7 WD repeats span residues 12 to 51, 57 to 96, 101 to 140, 146 to 185, 192 to 231, 250 to 289, and 301 to 335; these read GHKG…WSTK, GHKR…FECN, GHEN…EFEC, PHTQ…NDWD, SHTS…NTAG, QHSR…KPDE, and AHDQ…KVSE.

Belongs to the WD repeat CIA1 family.

Its function is as follows. Essential component of the cytosolic iron-sulfur (Fe/S) protein assembly machinery. Required for the maturation of extramitochondrial Fe/S proteins. The chain is Probable cytosolic iron-sulfur protein assembly protein Ciao1 from Drosophila simulans (Fruit fly).